The following is a 31-amino-acid chain: Cytochrome b6-f complex subunit 6 (31 aa).

A helical transmembrane segment spans residues 4–24 (ITSYFGFLLAALTITSALFIG).

This sequence belongs to the PetL family. The 4 large subunits of the cytochrome b6-f complex are cytochrome b6, subunit IV (17 kDa polypeptide, PetD), cytochrome f and the Rieske protein, while the 4 small subunits are PetG, PetL, PetM and PetN. The complex functions as a dimer.

Its subcellular location is the plastid. The protein resides in the chloroplast thylakoid membrane. Its function is as follows. Component of the cytochrome b6-f complex, which mediates electron transfer between photosystem II (PSII) and photosystem I (PSI), cyclic electron flow around PSI, and state transitions. PetL is important for photoautotrophic growth as well as for electron transfer efficiency and stability of the cytochrome b6-f complex. The sequence is that of Cytochrome b6-f complex subunit 6 from Coffea arabica (Arabian coffee).